Reading from the N-terminus, the 224-residue chain is Urease accessory protein UreF (224 aa).

The protein belongs to the UreF family. In terms of assembly, ureD, UreF and UreG form a complex that acts as a GTP-hydrolysis-dependent molecular chaperone, activating the urease apoprotein by helping to assemble the nickel containing metallocenter of UreC. The UreE protein probably delivers the nickel.

It localises to the cytoplasm. In terms of biological role, required for maturation of urease via the functional incorporation of the urease nickel metallocenter. This is Urease accessory protein UreF from Pseudomonas putida (strain GB-1).